The chain runs to 485 residues: Inosine-5'-monophosphate dehydrogenase (485 aa).

2 consecutive CBS domains span residues 95–154 (VITN…IDDV) and 155–215 (MTKE…AKDS). Residues Asp-249 and 299-301 (GIG) contribute to the NAD(+) site. K(+) contacts are provided by Gly-301 and Gly-303. Ser-304 is a binding site for IMP. Cys-306 contributes to the K(+) binding site. Cys-306 acts as the Thioimidate intermediate in catalysis. Residues 339-341 (DGG), 362-363 (GS), and 386-390 (YRGMG) contribute to the IMP site. Arg-402 serves as the catalytic Proton acceptor. Residue Glu-414 coordinates IMP. Positions 468, 469, and 470 each coordinate K(+).

It belongs to the IMPDH/GMPR family. As to quaternary structure, homotetramer. K(+) is required as a cofactor.

The enzyme catalyses IMP + NAD(+) + H2O = XMP + NADH + H(+). Its pathway is purine metabolism; XMP biosynthesis via de novo pathway; XMP from IMP: step 1/1. Mycophenolic acid (MPA) is a non-competitive inhibitor that prevents formation of the closed enzyme conformation by binding to the same site as the amobile flap. In contrast, mizoribine monophosphate (MZP) is a competitive inhibitor that induces the closed conformation. MPA is a potent inhibitor of mammalian IMPDHs but a poor inhibitor of the bacterial enzymes. MZP is a more potent inhibitor of bacterial IMPDH. In terms of biological role, catalyzes the conversion of inosine 5'-phosphate (IMP) to xanthosine 5'-phosphate (XMP), the first committed and rate-limiting step in the de novo synthesis of guanine nucleotides, and therefore plays an important role in the regulation of cell growth. This is Inosine-5'-monophosphate dehydrogenase from Halalkalibacterium halodurans (strain ATCC BAA-125 / DSM 18197 / FERM 7344 / JCM 9153 / C-125) (Bacillus halodurans).